Reading from the N-terminus, the 245-residue chain is tRNA pseudouridine synthase A (245 aa).

Residue Asp52 is the Nucleophile of the active site. A substrate-binding site is contributed by Tyr112.

Belongs to the tRNA pseudouridine synthase TruA family. As to quaternary structure, homodimer.

It carries out the reaction uridine(38/39/40) in tRNA = pseudouridine(38/39/40) in tRNA. Its function is as follows. Formation of pseudouridine at positions 38, 39 and 40 in the anticodon stem and loop of transfer RNAs. This is tRNA pseudouridine synthase A from Dictyoglomus turgidum (strain DSM 6724 / Z-1310).